A 663-amino-acid polypeptide reads, in one-letter code: MSRFIRASQRRTLLATLIAATLAQPLLAAESLDSKPASAITAAKNAEVLKNLPFADREEFEAAKRGLIAPFSGQIKNAEGQVVWDMGAYQFLNDKDAADTVNPSLWHQAQLNNIAGLFEVMPKLYQVRGLDPANMTIIEGDSGLVLIDTLTTAETARAALDLYFQHRPKKPIVAVVYSHSHIDHFGGARGIIDEADVKAGKVKVFAPSGFMEHAVSENILAGTAMARRGQYQSGVMVPRGAQAQVDSGLFKTTATNATNTLVAPNVLIEKPYERHTVDGVELEFQLTLGSEAPSDMNIYLPQFKVLNTADNAPPAMHNLLTPRGAEVRDAKAWAGYIDASLEKYGDRTDVLIQQHNWPVWGGDKVRTYLADQRDMYAFLNNRALNLMNKGLTLHEIAAEVSKLPGELDRKWYLRSYYGALSTNLRAVYQRYLGFYDGNPANLDPFPPVEAGKRYVEAMGGADAVLKQMRAAIDKGDYRWAVQLGNHLVFADPANKDARALQADAMEQLGYQTENALWRNMYMTGAMELRHGVPTYDSRGKSEMGRALTPDMFFDLLAIRLDTDKAVGHDMTLNWVFEDLKQDIALTLRNGVLTQRVGSLNPKADVTVKLTKPTLDQIAARKLDLPTAIKQGTVKLDGDGKKLGEFFGLLDSFSPKFNIVEPLE.

A signal peptide spans methionine 1–alanine 28. Residues histidine 179, histidine 181, aspartate 183, and histidine 184 each contribute to the Zn(2+) site. Glutamine 232 provides a ligand contact to sulfate. Residues glutamate 291 and aspartate 310 each contribute to the Zn(2+) site. Residues asparagine 318 to arginine 323 and arginine 328 each bind sulfate. A Zn(2+)-binding site is contributed by histidine 355. Tyrosine 417 provides a ligand contact to sulfate.

It belongs to the metallo-beta-lactamase superfamily. Type III sulfatase family. In terms of assembly, homodimer.

It carries out the reaction an (R)-secondary-alkyl sulfate + H2O = an (S)-secondary-alcohol + sulfate.. Functionally, alkylsulfatase that catalyzes the enantioselective hydrolysis of secondary-alkylsulfates with strict inversion of configuration, leading to the formation of homochiral (S)-configurated alcohols and nonreacted sulfate esters. The substrate spectrum includes a range of linear, branched or cyclic sec-alkylsulfates. Can use sec-alkylsulfate esters bearing aromatic, olefinic and acetylenic moieties. Acts by cleaving the C-O bond, resulting in inversion at the carbon. In Pseudomonas sp, this protein is (R)-specific secondary-alkylsulfatase.